A 689-amino-acid polypeptide reads, in one-letter code: DNA polymerase epsilon subunit B (689 aa).

The segment covering 98 to 115 (EWSHEHPIQHEENILGRT) has biased composition (basic and acidic residues). The tract at residues 98-155 (EWSHEHPIQHEENILGRTDDDENNSDDEMPIAADSSLQNVSLSSPMRQPTERDEYKQP) is disordered. A compositionally biased stretch (acidic residues) spans 116–126 (DDDENNSDDEM). Serine 122 is modified (phosphoserine). Over residues 132–144 (SSLQNVSLSSPMR) the composition is skewed to polar residues. Serine 141 carries the phosphoserine; by CDC28 modification. Residues 146-155 (PTERDEYKQP) are compositionally biased toward basic and acidic residues. Serine 613 bears the Phosphoserine mark.

Belongs to the DNA polymerase epsilon subunit B family. DNA polymerase epsilon is a heterotetramer consisting of POL2, DPB2, DPB3 and DPB4. Phosphorylated in a cell cycle dependent manner during late G1 phase. Phosphorylation may facilitate the interaction with POL2 or the activity of DNA polymerase II. Phosphorylation is independent of DNA replication but dependent upon CDC28 in vivo. Both Ser-141 and Ser-613 are phosphorylated in vivo, but in vitro only Ser-141 is phosphorylated by CDC28.

The protein localises to the cytoplasm. The protein resides in the nucleus. Functionally, as accessory component of the DNA polymerase epsilon complex participates in chromosomal DNA replication. It is required during synthesis of the leading and lagging DNA strands at the replication fork and binds at/or near replication origins and moves along DNA with the replication fork. It has 3'-5' proofreading exonuclease activity that correct errors arising during DNA replication. It is also involved in DNA synthesis during DNA repair. The protein is DNA polymerase epsilon subunit B (DPB2) of Saccharomyces cerevisiae (strain ATCC 204508 / S288c) (Baker's yeast).